Here is a 60-residue protein sequence, read N- to C-terminus: Large ribosomal subunit protein uL30 (60 aa).

It belongs to the universal ribosomal protein uL30 family. As to quaternary structure, part of the 50S ribosomal subunit.

The protein is Large ribosomal subunit protein uL30 of Streptomyces avermitilis (strain ATCC 31267 / DSM 46492 / JCM 5070 / NBRC 14893 / NCIMB 12804 / NRRL 8165 / MA-4680).